The primary structure comprises 345 residues: S-adenosylmethionine:tRNA ribosyltransferase-isomerase (345 aa).

Belongs to the QueA family. As to quaternary structure, monomer.

It is found in the cytoplasm. It catalyses the reaction 7-aminomethyl-7-carbaguanosine(34) in tRNA + S-adenosyl-L-methionine = epoxyqueuosine(34) in tRNA + adenine + L-methionine + 2 H(+). It participates in tRNA modification; tRNA-queuosine biosynthesis. In terms of biological role, transfers and isomerizes the ribose moiety from AdoMet to the 7-aminomethyl group of 7-deazaguanine (preQ1-tRNA) to give epoxyqueuosine (oQ-tRNA). In Helicobacter pylori (strain J99 / ATCC 700824) (Campylobacter pylori J99), this protein is S-adenosylmethionine:tRNA ribosyltransferase-isomerase.